A 94-amino-acid chain; its full sequence is Co-chaperonin GroES (94 aa).

The protein belongs to the GroES chaperonin family. Heptamer of 7 subunits arranged in a ring. Interacts with the chaperonin GroEL.

It localises to the cytoplasm. Together with the chaperonin GroEL, plays an essential role in assisting protein folding. The GroEL-GroES system forms a nano-cage that allows encapsulation of the non-native substrate proteins and provides a physical environment optimized to promote and accelerate protein folding. GroES binds to the apical surface of the GroEL ring, thereby capping the opening of the GroEL channel. This Bacillus cytotoxicus (strain DSM 22905 / CIP 110041 / 391-98 / NVH 391-98) protein is Co-chaperonin GroES.